We begin with the raw amino-acid sequence, 424 residues long: Histidine--tRNA ligase (424 aa).

It belongs to the class-II aminoacyl-tRNA synthetase family. As to quaternary structure, homodimer.

It localises to the cytoplasm. It catalyses the reaction tRNA(His) + L-histidine + ATP = L-histidyl-tRNA(His) + AMP + diphosphate + H(+). This chain is Histidine--tRNA ligase, found in Salmonella paratyphi A (strain ATCC 9150 / SARB42).